Here is a 252-residue protein sequence, read N- to C-terminus: Imidazole glycerol phosphate synthase subunit HisF (252 aa).

Residues aspartate 11 and aspartate 130 contribute to the active site.

This sequence belongs to the HisA/HisF family. In terms of assembly, heterodimer of HisH and HisF.

Its subcellular location is the cytoplasm. It carries out the reaction 5-[(5-phospho-1-deoxy-D-ribulos-1-ylimino)methylamino]-1-(5-phospho-beta-D-ribosyl)imidazole-4-carboxamide + L-glutamine = D-erythro-1-(imidazol-4-yl)glycerol 3-phosphate + 5-amino-1-(5-phospho-beta-D-ribosyl)imidazole-4-carboxamide + L-glutamate + H(+). The protein operates within amino-acid biosynthesis; L-histidine biosynthesis; L-histidine from 5-phospho-alpha-D-ribose 1-diphosphate: step 5/9. In terms of biological role, IGPS catalyzes the conversion of PRFAR and glutamine to IGP, AICAR and glutamate. The HisF subunit catalyzes the cyclization activity that produces IGP and AICAR from PRFAR using the ammonia provided by the HisH subunit. The chain is Imidazole glycerol phosphate synthase subunit HisF from Polynucleobacter asymbioticus (strain DSM 18221 / CIP 109841 / QLW-P1DMWA-1) (Polynucleobacter necessarius subsp. asymbioticus).